We begin with the raw amino-acid sequence, 356 residues long: Cell division control protein 10 (356 aa).

A Septin-type G domain is found at 36–286 (KGFELNVLVV…NNYRKKIFEI (251 aa)). The G1 motif stretch occupies residues 46-53 (GRRGLGTS). GTP contacts are provided by residues 46-53 (GRRGLGTS) and threonine 70. The tract at residues 93 to 96 (TYHE) is G3 motif. Residues 163 to 166 (PKAD) form a G4 motif region. GTP contacts are provided by residues 164–172 (KADMYTPDE) and arginine 235.

The protein belongs to the TRAFAC class TrmE-Era-EngA-EngB-Septin-like GTPase superfamily. Septin GTPase family. In terms of assembly, component of the septin complex.

Its function is as follows. Septins are GTPases involved in cytokinesis. The septins localize to the site of cleavage and act as a structural scaffold that recruits different components involved in diverse processes at specific stages during the cell cycle. Septins are also involved in cell morphogenesis, chitin deposition, cell cycle regulation, cell compartmentalization and spore wall formation. The protein is Cell division control protein 10 (CDC10) of Encephalitozoon cuniculi (strain GB-M1) (Microsporidian parasite).